The chain runs to 269 residues: F-box protein At5g52880 (269 aa).

In terms of domain architecture, F-box spans 109-155 (DIDIPSLPQDILIHIFSFLEISSLVSSAQVSRSWNQATHENSLWQSQ).

The protein is F-box protein At5g52880 of Arabidopsis thaliana (Mouse-ear cress).